The following is a 469-amino-acid chain: Ribulose bisphosphate carboxylase large chain (469 aa).

K5 bears the N6,N6,N6-trimethyllysine mark. Positions 114 and 164 each coordinate substrate. K166 (proton acceptor) is an active-site residue. K168 is a substrate binding site. Mg(2+) is bound by residues K192, D194, and E195. Residue K192 is modified to N6-carboxylysine. H285 acts as the Proton acceptor in catalysis. Substrate is bound by residues R286, H318, and S370.

The protein belongs to the RuBisCO large chain family. Type I subfamily. As to quaternary structure, heterohexadecamer of 8 large chains and 8 small chains; disulfide-linked. The disulfide link is formed within the large subunit homodimers. Mg(2+) serves as cofactor. The disulfide bond which can form in the large chain dimeric partners within the hexadecamer appears to be associated with oxidative stress and protein turnover.

The protein resides in the plastid. It localises to the chloroplast. The enzyme catalyses 2 (2R)-3-phosphoglycerate + 2 H(+) = D-ribulose 1,5-bisphosphate + CO2 + H2O. It carries out the reaction D-ribulose 1,5-bisphosphate + O2 = 2-phosphoglycolate + (2R)-3-phosphoglycerate + 2 H(+). In terms of biological role, ruBisCO catalyzes two reactions: the carboxylation of D-ribulose 1,5-bisphosphate, the primary event in carbon dioxide fixation, as well as the oxidative fragmentation of the pentose substrate in the photorespiration process. Both reactions occur simultaneously and in competition at the same active site. This is Ribulose bisphosphate carboxylase large chain from Calycophyllum candidissimum (Degame lemonwood tree).